A 107-amino-acid chain; its full sequence is MKELDLSQISLLIDFYGNLLTDKQLQNLIDYYFNDLSLSEIAANNNVSRTAIHDSIKKSKNELEQFENKLKFIYRFNLRKEIYKQIKDNNLLDQLLETEVEQLWKTK.

The protein belongs to the UPF0122 family.

In terms of biological role, might take part in the signal recognition particle (SRP) pathway. This is inferred from the conservation of its genetic proximity to ftsY/ffh. May be a regulatory protein. In Malacoplasma penetrans (strain HF-2) (Mycoplasma penetrans), this protein is UPF0122 protein MYPE4850.